The following is a 345-amino-acid chain: MLSLSCSSSSSSLLPPSLHYHGSSSVQSIVVPRRSLISFRRKVSCCCIAPPQNLDNDATKFDSLTKSGGGMCKERGLENDSDVLIECRDVYKSFGEKHILKGVSFKIRHGEAVGVIGPSGTGKSTILKIMAGLLAPDKGEVYIRGKKRAGLISDEEISGLRIGLVFQSAALFDSLSVRENVGFLLYERSKMSENQISELVTQTLAAVGLKGVENRLPSELSGGMKKRVALARSLIFDTTKEVIEPEVLLYDEPTAGLDPIASTVVEDLIRSVHMTDEDAVGKPGKIASYLVVTHQHSTIQRAVDRLLFLYEGKIVWQGMTHEFTTSTNPIVQQFATGSLDGPIRY.

The N-terminal 46 residues, Met1 to Cys46, are a transit peptide targeting the chloroplast. The ABC transporter domain occupies Ile85 to Thr336. Residue Gly117–Ser124 participates in ATP binding.

The protein belongs to the ABC transporter superfamily. ABCI family. In terms of assembly, catalytic subunit of the TGD complex, a lipid translocator at the inner chloroplast envelope membrane made of TGD1, TGD2 and TGD3. Interacts with TGD1 and TGD2 with an overall subunit stoichiometry of 2 TGD1, 2 TGD3 and 8 to 12 TGD2. Interacts with TGD5.

It localises to the plastid. It is found in the chloroplast stroma. In terms of biological role, ATPase transporter involved in lipid transfer from the endoplasmic reticulum (ER) to plastids, and necessary for thylakoids formation. Not involved in transition metal transport pathways. The polypeptide is Protein TRIGALACTOSYLDIACYLGLYCEROL 3, chloroplastic (Arabidopsis thaliana (Mouse-ear cress)).